The primary structure comprises 744 residues: Photosystem I P700 chlorophyll a apoprotein A2 (744 aa).

8 consecutive transmembrane segments (helical) span residues 48–71 (LFAT…FHIA), 137–160 (LYAG…LHLQ), 177–201 (LNHH…HVAI), 275–293 (MAHH…GHMY), 337–360 (LHFQ…QHMY), 376–402 (AALY…IFLV), 424–446 (AIIS…LYVH), and 527–545 (FLVH…LILV). C569 and C578 together coordinate [4Fe-4S] cluster. A run of 2 helical transmembrane segments spans residues 585–606 (AFYL…YWHW) and 653–675 (LAVW…MFLI). Chlorophyll a is bound by residues H664, M672, and Y680. Phylloquinone is bound at residue W681. The chain crosses the membrane as a helical span at residues 717 to 737 (LVGLAHFTVGYVLTYAAFVIA).

The protein belongs to the PsaA/PsaB family. The PsaA/B heterodimer binds the P700 chlorophyll special pair and subsequent electron acceptors. PSI consists of a core antenna complex that captures photons, and an electron transfer chain that converts photonic excitation into a charge separation. The cyanobacterial PSI reaction center is composed of one copy each of PsaA,B,C,D,E,F,I,J,K,L,M and X, and forms trimeric complexes. Requires PSI electron transfer chain: 5 chlorophyll a, 1 chlorophyll a', 2 phylloquinones and 3 4Fe-4S clusters. PSI core antenna: 90 chlorophyll a, 22 carotenoids, 3 phospholipids and 1 galactolipid. P700 is a chlorophyll a/chlorophyll a' dimer, A0 is one or more chlorophyll a, A1 is one or both phylloquinones and FX is a shared 4Fe-4S iron-sulfur center. as cofactor.

The protein localises to the cellular thylakoid membrane. It catalyses the reaction reduced [plastocyanin] + hnu + oxidized [2Fe-2S]-[ferredoxin] = oxidized [plastocyanin] + reduced [2Fe-2S]-[ferredoxin]. Its function is as follows. PsaA and PsaB bind P700, the primary electron donor of photosystem I (PSI), as well as the electron acceptors A0, A1 and FX. PSI is a plastocyanin/cytochrome c6-ferredoxin oxidoreductase, converting photonic excitation into a charge separation, which transfers an electron from the donor P700 chlorophyll pair to the spectroscopically characterized acceptors A0, A1, FX, FA and FB in turn. Oxidized P700 is reduced on the lumenal side of the thylakoid membrane by plastocyanin or cytochrome c6. This is Photosystem I P700 chlorophyll a apoprotein A2 from Synechococcus sp. (strain JA-2-3B'a(2-13)) (Cyanobacteria bacterium Yellowstone B-Prime).